The following is a 396-amino-acid chain: Ribosomal RNA large subunit methyltransferase I (396 aa).

The PUA domain occupies 2–81; the sequence is SVRLVLAKGR…ETIDIAFFTR (80 aa).

It belongs to the methyltransferase superfamily. RlmI family.

Its subcellular location is the cytoplasm. It catalyses the reaction cytidine(1962) in 23S rRNA + S-adenosyl-L-methionine = 5-methylcytidine(1962) in 23S rRNA + S-adenosyl-L-homocysteine + H(+). In terms of biological role, specifically methylates the cytosine at position 1962 (m5C1962) of 23S rRNA. The protein is Ribosomal RNA large subunit methyltransferase I of Cronobacter sakazakii (strain ATCC BAA-894) (Enterobacter sakazakii).